Consider the following 121-residue polypeptide: Cell division protein FtsB (121 aa).

At 1–6 (MRNWRW) the chain is on the cytoplasmic side. Residues 7–24 (LLLVLAVLLAWLQYRFWF) form a helical membrane-spanning segment. The Periplasmic segment spans residues 25 to 121 (GPGNSGEVMM…AASADPVDHP (97 aa)). Residues 31–66 (EVMMLEAQVAHQTRDNEGLRQRNQALAAEVKDLKDG) adopt a coiled-coil conformation. The disordered stretch occupies residues 98–121 (PPAAQEAAPPAQPPAASADPVDHP).

This sequence belongs to the FtsB family. Part of a complex composed of FtsB, FtsL and FtsQ.

The protein localises to the cell inner membrane. Essential cell division protein. May link together the upstream cell division proteins, which are predominantly cytoplasmic, with the downstream cell division proteins, which are predominantly periplasmic. This chain is Cell division protein FtsB, found in Xanthomonas campestris pv. campestris (strain 8004).